We begin with the raw amino-acid sequence, 399 residues long: Tryptophan synthase beta chain (399 aa).

Lysine 90 is modified (N6-(pyridoxal phosphate)lysine).

This sequence belongs to the TrpB family. In terms of assembly, tetramer of two alpha and two beta chains. The cofactor is pyridoxal 5'-phosphate.

The catalysed reaction is (1S,2R)-1-C-(indol-3-yl)glycerol 3-phosphate + L-serine = D-glyceraldehyde 3-phosphate + L-tryptophan + H2O. The protein operates within amino-acid biosynthesis; L-tryptophan biosynthesis; L-tryptophan from chorismate: step 5/5. The beta subunit is responsible for the synthesis of L-tryptophan from indole and L-serine. This is Tryptophan synthase beta chain from Bacillus pumilus (strain SAFR-032).